A 247-amino-acid polypeptide reads, in one-letter code: uncharacterized protein (247 aa).

A run of 2 helical transmembrane segments spans residues 11-31 (LIAP…IYCV) and 39-59 (FIAI…TGLL).

It localises to the cell membrane. This is an uncharacterized protein from Haemophilus influenzae (strain ATCC 51907 / DSM 11121 / KW20 / Rd).